The chain runs to 623 residues: NADPH-dependent diflavin oxidoreductase 1 (623 aa).

The region spanning 8-153 (LLVLYASQTG…TLDPWMLSLW (146 aa)) is the Flavodoxin-like domain. Residues 14–19 (SQTGNA), 62–65 (STTG), and Asp135 each bind FMN. The FAD-binding FR-type domain maps to 221–467 (KPDCFLKMTR…SLPAPSQSLP (247 aa)). FAD contacts are provided by residues Arg369, 399 to 402 (RAFS), and 433 to 436 (GLCS). NADP(+) contacts are provided by residues Thr475, 541–542 (SR), 547–551 (KVYVQ), and Asp583. Trp622 lines the FAD pocket.

This sequence belongs to the NADPH-dependent diflavin oxidoreductase NDOR1 family. The protein in the N-terminal section; belongs to the flavodoxin family. In the C-terminal section; belongs to the flavoprotein pyridine nucleotide cytochrome reductase family. Interacts with At5g18400. FAD is required as a cofactor. It depends on FMN as a cofactor. In terms of tissue distribution, widely expressed.

It is found in the cytoplasm. It localises to the nucleus. It catalyses the reaction 2 oxidized [2Fe-2S]-[protein] + NADPH = 2 reduced [2Fe-2S]-[protein] + NADP(+) + H(+). Its function is as follows. NADPH-dependent reductase which is a central component of the cytosolic iron-sulfur (Fe-S) protein assembly (CIA) machinery. Transfers electrons from NADPH via its FAD and FMN prosthetic groups to the [2Fe-2S] cluster of the anamorsin/DRE2 homolog, another key component of the CIA machinery. In turn, this reduced cluster provides electrons for assembly of cytosolic iron-sulfur cluster proteins. Catalyzes the NADP-dependent reduction of cytochrome c, but not cytochrome P450 in vitro. Required for embryo development. The chain is NADPH-dependent diflavin oxidoreductase 1 (ATR3) from Arabidopsis thaliana (Mouse-ear cress).